The chain runs to 790 residues: Cadherin-18 (790 aa).

An N-terminal signal peptide occupies residues 1–24 (MKITSTSCICPVLVCLCFVQRCYG). The propeptide occupies 25–53 (TTHHGSIRGTRNQTKHIEGETEVHHRPKR). N-linked (GlcNAc...) asparagine glycosylation occurs at N36. Cadherin domains are found at residues 54 to 159 (GWVW…APKF), 160 to 268 (TDGP…PPRF), 269 to 383 (PQKH…PPLF), 384 to 486 (SMPS…DNPP), and 487 to 608 (ELAR…FLSS). Residues 54 to 608 (GWVWNQFFVL…TCHAEAFLSS (555 aa)) are Extracellular-facing. A glycan (N-linked (GlcNAc...) asparagine) is linked at N255. N-linked (GlcNAc...) asparagine glycosylation is found at N455 and N536. Residues 609–636 (AGLSTGALIAILLCVVILLAIVVLFITL) form a helical membrane-spanning segment. Residues 637–790 (RRSKKEPLII…YGEIESERTT (154 aa)) are Cytoplasmic-facing. The residue at position 786 (S786) is a Phosphoserine.

The protein resides in the cell membrane. Cadherins are calcium-dependent cell adhesion proteins. They preferentially interact with themselves in a homophilic manner in connecting cells; cadherins may thus contribute to the sorting of heterogeneous cell types. In Bos taurus (Bovine), this protein is Cadherin-18 (CDH18).